The chain runs to 127 residues: Small ribosomal subunit protein bS6 (127 aa).

A disordered region spans residues 96–127; the sequence is VTTPSPMMKEEKSRSLTPAAGDEGKPAEAAEA. Residues 117–127 are compositionally biased toward basic and acidic residues; the sequence is DEGKPAEAAEA.

It belongs to the bacterial ribosomal protein bS6 family.

Functionally, binds together with bS18 to 16S ribosomal RNA. The protein is Small ribosomal subunit protein bS6 of Azoarcus sp. (strain BH72).